We begin with the raw amino-acid sequence, 645 residues long: Threonine--tRNA ligase (645 aa).

The TGS domain maps to 1-63; sequence MDQIKIKFPD…ESDGDIEIVT (63 aa). The catalytic stretch occupies residues 242-540; the sequence is DHRKIGKELE…LTEETKGAFP (299 aa). Positions 336, 387, and 517 each coordinate Zn(2+).

This sequence belongs to the class-II aminoacyl-tRNA synthetase family. Homodimer. Zn(2+) serves as cofactor.

It localises to the cytoplasm. The catalysed reaction is tRNA(Thr) + L-threonine + ATP = L-threonyl-tRNA(Thr) + AMP + diphosphate + H(+). In terms of biological role, catalyzes the attachment of threonine to tRNA(Thr) in a two-step reaction: L-threonine is first activated by ATP to form Thr-AMP and then transferred to the acceptor end of tRNA(Thr). Also edits incorrectly charged L-seryl-tRNA(Thr). This chain is Threonine--tRNA ligase, found in Staphylococcus saprophyticus subsp. saprophyticus (strain ATCC 15305 / DSM 20229 / NCIMB 8711 / NCTC 7292 / S-41).